We begin with the raw amino-acid sequence, 90 residues long: Protein A54 (90 aa).

The protein is Protein A54 of Homo sapiens (Human).